The primary structure comprises 163 residues: Crossover junction endodeoxyribonuclease RuvC (163 aa).

Residues Asp-7, Glu-66, and Asp-139 contribute to the active site. Residues Asp-7, Glu-66, and Asp-139 each contribute to the Mg(2+) site.

Belongs to the RuvC family. As to quaternary structure, homodimer which binds Holliday junction (HJ) DNA. The HJ becomes 2-fold symmetrical on binding to RuvC with unstacked arms; it has a different conformation from HJ DNA in complex with RuvA. In the full resolvosome a probable DNA-RuvA(4)-RuvB(12)-RuvC(2) complex forms which resolves the HJ. Mg(2+) serves as cofactor.

Its subcellular location is the cytoplasm. The enzyme catalyses Endonucleolytic cleavage at a junction such as a reciprocal single-stranded crossover between two homologous DNA duplexes (Holliday junction).. Functionally, the RuvA-RuvB-RuvC complex processes Holliday junction (HJ) DNA during genetic recombination and DNA repair. Endonuclease that resolves HJ intermediates. Cleaves cruciform DNA by making single-stranded nicks across the HJ at symmetrical positions within the homologous arms, yielding a 5'-phosphate and a 3'-hydroxyl group; requires a central core of homology in the junction. The consensus cleavage sequence is 5'-(A/T)TT(C/G)-3'. Cleavage occurs on the 3'-side of the TT dinucleotide at the point of strand exchange. HJ branch migration catalyzed by RuvA-RuvB allows RuvC to scan DNA until it finds its consensus sequence, where it cleaves and resolves the cruciform DNA. The protein is Crossover junction endodeoxyribonuclease RuvC of Thermomicrobium roseum (strain ATCC 27502 / DSM 5159 / P-2).